The chain runs to 35 residues: MSDIN-like toxin proprotein 6 (35 aa).

The propeptide occupies 1–10; it reads MSDINTTRLP. The segment at residues 11–18 is a cross-link (cyclopeptide (Phe-Pro)); it reads FVFVASPP. A propeptide spanning residues 19-35 is cleaved from the precursor; it reads CVGDDIAMVLTRGENLC.

This sequence belongs to the MSDIN fungal toxin family. Post-translationally, processed by the macrocyclase-peptidase enzyme POPB to yield a toxic cyclic octapeptide. POPB first removes 10 residues from the N-terminus. Conformational trapping of the remaining peptide forces the enzyme to release this intermediate rather than proceed to macrocyclization. The enzyme rebinds the remaining peptide in a different conformation and catalyzes macrocyclization of the N-terminal 8 residues. As to expression, expressed in basidiocarps.

Probable toxin that belongs to the MSDIN-like toxin family responsible for a large number of food poisoning cases and deaths. This is MSDIN-like toxin proprotein 6 from Amanita exitialis (Guangzhou destroying angel).